Reading from the N-terminus, the 439-residue chain is Xylose isomerase (439 aa).

Active-site residues include His-101 and Asp-104. 7 residues coordinate Mg(2+): Glu-232, Glu-268, His-271, Asp-296, Asp-307, Asp-309, and Asp-339.

Belongs to the xylose isomerase family. In terms of assembly, homotetramer. Requires Mg(2+) as cofactor.

Its subcellular location is the cytoplasm. The enzyme catalyses alpha-D-xylose = alpha-D-xylulofuranose. This Thermoanaerobacterium thermosaccharolyticum (strain ATCC 7956 / DSM 571 / NCIMB 9385 / NCA 3814 / NCTC 13789 / WDCM 00135 / 2032) (Clostridium thermosaccharolyticum) protein is Xylose isomerase (xylA).